A 71-amino-acid chain; its full sequence is Plasticin-C2 (71 aa).

An N-terminal signal peptide occupies residues 1–22 (MAFLKKSLLLVLFLALVPLSIC). Positions 23-45 (EEEKREEEDEEKQEDDDQSENKR) are excised as a propeptide. The interval 25–46 (EKREEEDEEKQEDDDQSENKRG) is disordered. Residues 26 to 40 (KREEEDEEKQEDDDQ) show a composition bias toward acidic residues. Asparagine amide is present on N68. The propeptide occupies 70–71 (ES).

Belongs to the frog skin active peptide (FSAP) family. Plasticin subfamily. Expressed by the skin glands.

It is found in the secreted. It localises to the target cell membrane. Neutral peptide with no antimicrobial activity. May act in synergy with cationic peptides by enhancing their activity. Has a moderate hemolytic activity. The polypeptide is Plasticin-C2 (Agalychnis callidryas (Red-eyed tree frog)).